Reading from the N-terminus, the 499-residue chain is Apolipoprotein N-acyltransferase (499 aa).

The next 6 helical transmembrane spans lie at 17 to 37 (VLAG…ALAL), 38 to 58 (LWSA…AVLL), 84 to 104 (ASIW…WAWL), 131 to 151 (IWGL…GVGG), 163 to 183 (LARW…GWWL), and 198 to 218 (RSLL…WSLL). In terms of domain architecture, CN hydrolase spans 232–458 (WQPAIPTRSK…EGVGLADLHF (227 aa)). The active-site Proton acceptor is the Glu273. Lys322 is a catalytic residue. Residue Cys370 is the Nucleophile of the active site. Residues 474–494 (IGLMLFAVVGLGLSRVRSWLI) form a helical membrane-spanning segment.

It belongs to the CN hydrolase family. Apolipoprotein N-acyltransferase subfamily.

It is found in the cell inner membrane. The enzyme catalyses N-terminal S-1,2-diacyl-sn-glyceryl-L-cysteinyl-[lipoprotein] + a glycerophospholipid = N-acyl-S-1,2-diacyl-sn-glyceryl-L-cysteinyl-[lipoprotein] + a 2-acyl-sn-glycero-3-phospholipid + H(+). It participates in protein modification; lipoprotein biosynthesis (N-acyl transfer). In terms of biological role, catalyzes the phospholipid dependent N-acylation of the N-terminal cysteine of apolipoprotein, the last step in lipoprotein maturation. In Prochlorococcus marinus (strain MIT 9313), this protein is Apolipoprotein N-acyltransferase.